Reading from the N-terminus, the 488-residue chain is Glutamate--tRNA ligase (488 aa).

Positions 9-19 (PSPTGFLHIGG) match the 'HIGH' region motif. Residues cysteine 112, cysteine 114, cysteine 139, and histidine 141 each contribute to the Zn(2+) site. Residues 256–260 (KLSKR) carry the 'KMSKS' region motif. Lysine 259 provides a ligand contact to ATP.

Belongs to the class-I aminoacyl-tRNA synthetase family. Glutamate--tRNA ligase type 1 subfamily. In terms of assembly, monomer. Zn(2+) serves as cofactor.

The protein localises to the cytoplasm. It carries out the reaction tRNA(Glu) + L-glutamate + ATP = L-glutamyl-tRNA(Glu) + AMP + diphosphate. Functionally, catalyzes the attachment of glutamate to tRNA(Glu) in a two-step reaction: glutamate is first activated by ATP to form Glu-AMP and then transferred to the acceptor end of tRNA(Glu). The polypeptide is Glutamate--tRNA ligase (Elusimicrobium minutum (strain Pei191)).